A 224-amino-acid polypeptide reads, in one-letter code: Heme response regulator HssR (224 aa).

Positions N3 to L116 constitute a Response regulatory domain. D52 is modified (4-aspartylphosphate). The segment at residues D124–Q222 is a DNA-binding region (ompR/PhoB-type).

In terms of processing, phosphorylated by HssS.

The protein localises to the cytoplasm. Functionally, member of the two-component regulatory system HssS/HssR involved in intracellular heme homeostasis and tempering of staphylococcal virulence. Phosphorylated HssR binds to a direct repeat sequence within hrtAB promoter and activates the expression of hrtAB, an efflux pump, in response to extracellular heme, hemin, hemoglobin or blood. The protein is Heme response regulator HssR (hssR) of Staphylococcus epidermidis (strain ATCC 12228 / FDA PCI 1200).